The sequence spans 195 residues: Large ribosomal subunit protein bL27c (195 aa).

The N-terminal 60 residues, 1-60 (MASMAFTLVGAFKGMSLSSPCHSSSSASFLRADRVSLSVGGGVGMGVPMTMPVRRLTIQM), are a transit peptide targeting the chloroplast.

The protein belongs to the bacterial ribosomal protein bL27 family. Part of the 50S ribosomal subunit.

The protein resides in the plastid. The protein localises to the chloroplast. The chain is Large ribosomal subunit protein bL27c (RPL27) from Oryza sativa subsp. japonica (Rice).